We begin with the raw amino-acid sequence, 172 residues long: uncharacterized protein (172 aa).

Positions 1–148 (MANSQKVIDV…TIHDFFENGN (148 aa)) constitute a Ferritin-like diiron domain.

This is an uncharacterized protein from Ureaplasma urealyticum (Ureaplasma urealyticum biotype 2).